The following is a 333-amino-acid chain: Mitochondrial 2-oxoglutarate/malate carrier protein (333 aa).

Solcar repeat units lie at residues 29 to 127 (FRLI…LFER), 136 to 227 (PGFL…SKQF), and 236 to 325 (DNIL…MNKA). The next 6 helical transmembrane spans lie at 30-61 (RLIALGTCGDSCTHVRQPPKTWMGATVFVQPL), 102-120 (GLSAGLLRQATYTTTRLGI), 138-159 (FLLKALIGMTAGATGAFVGTPA), 202-221 (GCIPTMARAVVVNAAQLASY), 241-259 (HFCASMISGLVTTAASMPV), and 300-319 (GFTPYYARLGPHTVLTFIFL).

This sequence belongs to the mitochondrial carrier (TC 2.A.29) family. In terms of assembly, interacts with SMIM26.

It localises to the membrane. It carries out the reaction (S)-malate(in) + 2-oxoglutarate(out) = (S)-malate(out) + 2-oxoglutarate(in). The enzyme catalyses malonate(in) + 2-oxoglutarate(out) = malonate(out) + 2-oxoglutarate(in). It catalyses the reaction succinate(in) + 2-oxoglutarate(out) = succinate(out) + 2-oxoglutarate(in). The catalysed reaction is maleate(in) + 2-oxoglutarate(out) = maleate(out) + 2-oxoglutarate(in). It carries out the reaction oxaloacetate(in) + 2-oxoglutarate(out) = oxaloacetate(out) + 2-oxoglutarate(in). In terms of biological role, catalyzes the transport of 2-oxoglutarate (alpha-oxoglutarate) across the inner mitochondrial membrane in an electroneutral exchange for malate. Can also exchange 2-oxoglutarate for other dicarboxylic acids such as malonate, succinate, maleate and oxaloacetate, although with lower affinity. Contributes to several metabolic processes, including the malate-aspartate shuttle, the oxoglutarate/isocitrate shuttle, in gluconeogenesis from lactate, and in nitrogen metabolism. Maintains mitochondrial fusion and fission events, and the organization and morphology of cristae. Involved in the regulation of apoptosis. Helps protect from cytotoxic-induced apoptosis by modulating glutathione levels in mitochondria. In Sus scrofa (Pig), this protein is Mitochondrial 2-oxoglutarate/malate carrier protein (SLC25A11).